Here is a 125-residue protein sequence, read N- to C-terminus: 14 kDa phosphohistidine phosphatase (125 aa).

Ala2 carries the post-translational modification N-acetylalanine. Position 21 (Lys21) interacts with substrate. Catalysis depends on His53, which acts as the Proton acceptor. 94–96 (SMG) serves as a coordination point for substrate.

As to quaternary structure, monomer.

Its subcellular location is the cytoplasm. It catalyses the reaction N(pros)-phospho-L-histidyl-[protein] + H2O = L-histidyl-[protein] + phosphate. The enzyme catalyses N(tele)-phospho-L-histidyl-[protein] + H2O = L-histidyl-[protein] + phosphate. Exhibits phosphohistidine phosphatase activity. Functionally, may have a significant involvement in neuronal signaling. This chain is 14 kDa phosphohistidine phosphatase (PHPT1), found in Oryctolagus cuniculus (Rabbit).